The following is a 551-amino-acid chain: Pyrroline-5-carboxylate reductase 1 (551 aa).

Residues 279–551 form a disordered region; that stretch reads LYTQKQQNKK…RHEVKTEQIN (273 aa). Composition is skewed to low complexity over residues 282–298, 306–342, 383–415, 424–441, 448–475, 487–496, and 503–520; these read QKQQ…QQHQ, QQHQ…YGHQ, QQYQ…SNQR, KSPQ…QPSS, QQQQ…QQQP, QQQQPQQQQQ, and YNNN…NNYN. Residues 537 to 551 show a composition bias toward basic and acidic residues; that stretch reads YHDEKRHEVKTEQIN.

It belongs to the pyrroline-5-carboxylate reductase family. In terms of assembly, homodecamer; composed of 5 homodimers.

The catalysed reaction is L-proline + NADP(+) = (S)-1-pyrroline-5-carboxylate + NADPH + 2 H(+). It carries out the reaction L-proline + NAD(+) = (S)-1-pyrroline-5-carboxylate + NADH + 2 H(+). Its pathway is amino-acid biosynthesis; L-proline biosynthesis; L-proline from L-glutamate 5-semialdehyde: step 1/1. The protein is Pyrroline-5-carboxylate reductase 1 (pycr1) of Dictyostelium discoideum (Social amoeba).